Here is a 464-residue protein sequence, read N- to C-terminus: NADH-ubiquinone oxidoreductase chain 4 (464 aa).

13 helical membrane-spanning segments follow: residues 18-38 (LLPT…VLPT), 54-74 (IADI…IANW), 79-99 (SLLY…NFMC), 102-122 (MLSF…LIGL), 131-151 (AADY…LAIG), 168-188 (VVLS…GIMV), 207-227 (PLAG…YAII), 239-259 (VLYT…TSII), 266-286 (LKVI…LGIL), 297-317 (LILS…VGGI), 332-352 (GLLT…FSNI), 375-395 (TILG…MLKV), and 420-440 (LLMI…NGII).

This sequence belongs to the complex I subunit 4 family.

It localises to the mitochondrion membrane. The enzyme catalyses a ubiquinone + NADH + 5 H(+)(in) = a ubiquinol + NAD(+) + 4 H(+)(out). In terms of biological role, core subunit of the mitochondrial membrane respiratory chain NADH dehydrogenase (Complex I) that is believed to belong to the minimal assembly required for catalysis. Complex I functions in the transfer of electrons from NADH to the respiratory chain. The immediate electron acceptor for the enzyme is believed to be ubiquinone. The protein is NADH-ubiquinone oxidoreductase chain 4 (NAD4) of Candida albicans (strain SC5314 / ATCC MYA-2876) (Yeast).